Consider the following 396-residue polypeptide: uncharacterized protein (396 aa).

N6-(pyridoxal phosphate)lysine is present on lysine 219.

Belongs to the class-V pyridoxal-phosphate-dependent aminotransferase family. It depends on pyridoxal 5'-phosphate as a cofactor.

Its subcellular location is the cytoplasm. The protein localises to the nucleus. This is an uncharacterized protein from Schizosaccharomyces pombe (strain 972 / ATCC 24843) (Fission yeast).